A 257-amino-acid chain; its full sequence is uncharacterized protein (257 aa).

A helical transmembrane segment spans residues 7-27 (LMLGICLVLLIILIVGYVIMT).

Belongs to the staphylococcal tandem lipoprotein family.

It localises to the cell membrane. This is an uncharacterized protein from Staphylococcus aureus (strain Mu50 / ATCC 700699).